A 260-amino-acid polypeptide reads, in one-letter code: Granzyme A (260 aa).

An N-terminal signal peptide occupies residues 1–26; sequence MRNASGPRGPSLATLLFLLLIPEGGC. Positions 27–28 are cleaved as a propeptide — activation peptide; sequence ER. Residues 29-257 enclose the Peptidase S1 domain; that stretch reads IIGGDTVVPH…HLNWIKKIMK (229 aa). An intrachain disulfide couples cysteine 54 to cysteine 70. Catalysis depends on charge relay system residues histidine 69 and aspartate 113. 3 disulfide bridges follow: cysteine 147–cysteine 217, cysteine 178–cysteine 196, and cysteine 207–cysteine 232. Residues asparagine 157 and asparagine 169 are each glycosylated (N-linked (GlcNAc...) asparagine). Catalysis depends on serine 211, which acts as the Charge relay system.

It belongs to the peptidase S1 family. Granzyme subfamily. Homodimer; disulfide-linked. Interacts with APEX1. As to expression, found in cytotoxic lymphocytes and in normal lymphoid tissues such as thymus and spleen. In terms of tissue distribution, more abundant in lymphoid tissues than isoform HF2.

The protein localises to the secreted. Its subcellular location is the cytoplasmic granule. It catalyses the reaction Hydrolysis of proteins, including fibronectin, type IV collagen and nucleolin. Preferential cleavage: -Arg-|-Xaa-, -Lys-|-Xaa- &gt;&gt; -Phe-|-Xaa- in small molecule substrates.. Abundant protease in the cytosolic granules of cytotoxic T-cells and NK-cells which activates caspase-independent pyroptosis when delivered into the target cell through the immunological synapse. It cleaves after Lys or Arg. Cleaves APEX1 after 'Lys-31' and destroys its oxidative repair activity. Cleaves the nucleosome assembly protein SET after 'Lys-189', which disrupts its nucleosome assembly activity and allows the SET complex to translocate into the nucleus to nick and degrade the DNA. The protein is Granzyme A (Gzma) of Mus musculus (Mouse).